An 831-amino-acid chain; its full sequence is Probable DNA-directed RNA polymerase (831 aa).

Catalysis depends on residues aspartate 490, lysine 560, and aspartate 738.

The protein belongs to the phage and mitochondrial RNA polymerase family.

The protein resides in the mitochondrion. It catalyses the reaction RNA(n) + a ribonucleoside 5'-triphosphate = RNA(n+1) + diphosphate. In terms of biological role, DNA-dependent RNA polymerase catalyzes the transcription of DNA into RNA using the four ribonucleoside triphosphates as substrates. The chain is Probable DNA-directed RNA polymerase from Gelasinospora sp. (strain G114).